A 218-amino-acid chain; its full sequence is Probable transaldolase (218 aa).

Residue Lys83 is the Schiff-base intermediate with substrate of the active site.

The protein belongs to the transaldolase family. Type 3B subfamily.

Its subcellular location is the cytoplasm. The catalysed reaction is D-sedoheptulose 7-phosphate + D-glyceraldehyde 3-phosphate = D-erythrose 4-phosphate + beta-D-fructose 6-phosphate. Its pathway is carbohydrate degradation; pentose phosphate pathway; D-glyceraldehyde 3-phosphate and beta-D-fructose 6-phosphate from D-ribose 5-phosphate and D-xylulose 5-phosphate (non-oxidative stage): step 2/3. Functionally, transaldolase is important for the balance of metabolites in the pentose-phosphate pathway. This is Probable transaldolase from Thermotoga sp. (strain RQ2).